The following is a 428-amino-acid chain: Spliceosome RNA helicase DDX39B (428 aa).

Over residues 1–19 the composition is skewed to acidic residues; it reads MAENDVDNELLDYEEDEVE. The disordered stretch occupies residues 1–32; sequence MAENDVDNELLDYEEDEVETAAGGDGSEAPAK. A2 is modified (N-acetylalanine). An N6-acetyllysine; alternate modification is found at K36. K36 is covalently cross-linked (Glycyl lysine isopeptide (Lys-Gly) (interchain with G-Cter in SUMO2); alternate). 2 positions are modified to phosphoserine: S38 and S41. The Q motif motif lies at 45-73; it reads SGFRDFLLKPELLRAIVDCGFEHPSEVQH. The 174-residue stretch at 76-249 folds into the Helicase ATP-binding domain; it reads IPQAILGMDV…RKFMQDPMEI (174 aa). 89 to 96 provides a ligand contact to ATP; it reads AKSGMGKT. T172 bears the Phosphothreonine mark. The DECD box signature appears at 196-199; sequence DECD. Positions 261-422 constitute a Helicase C-terminal domain; it reads GLQQYYVKLK…ELPDEIDISS (162 aa).

It belongs to the DEAD box helicase family. DECD subfamily. In terms of assembly, homodimer, and heterodimer with DDX39A. DDX39B interacts with the THO subcomplex to form the THO-DDX39B complex which multimerizes into a 28-subunit tetrameric assembly. Component of the transcription/export (TREX) complex at least composed of ALYREF/THOC4, DDX39B, SARNP/CIP29, CHTOP and the THO subcomplex; in the complex interacts with THOC2. THOC1-THOC2-THOC3-DDX39B subcomplex is sufficient for the interaction with export factor NXF1-NXT1. TREX seems to have a dynamic structure involving ATP-dependent remodeling. Within the TREX complex bridges ALYREF/THOC4 and the THO subcomplex, and, in a ATP-dependent manner, ALYREF/THOC4 and SARNP/CIP29. Component of the spliceosome. Interacts directly with U2AF2. Interacts with RBM8A, RNPS1 and SRRM1, FYTTD1/UIF, THOC1, MX1 and POLDIP3. Interacts with LUZP4. Interacts with SARNP/CIP29 (via the C-terminal domain); the interaction is direct and facilitates RNA binding of DDX39B.

Its subcellular location is the nucleus. The protein resides in the nucleus speckle. It is found in the cytoplasm. The catalysed reaction is ATP + H2O = ADP + phosphate + H(+). Functionally, involved in nuclear export of spliced and unspliced mRNA. Component of the TREX complex which is thought to couple mRNA transcription, processing and nuclear export, and specifically associates with spliced mRNA and not with unspliced pre-mRNA. The TREX complex is recruited to spliced mRNAs by a transcription-independent mechanism, binds to mRNA upstream of the exon-junction complex (EJC) and is recruited in a splicing- and cap-dependent manner to a region near the 5' end of the mRNA where it functions in mRNA export to the cytoplasm via the TAP/NXF1 pathway. The THOC1-THOC2-THOC3 core complex alone is sufficient to promote ATPase activity of DDX39B; in the complex THOC2 is the only component that directly interacts with DDX39B. Associates with SARNP/CIP29, which facilitates RNA binding of DDX39B and likely plays a role in mRNA export. May undergo several rounds of ATP hydrolysis during assembly of TREX to drive subsequent loading of components such as ALYREF/THOC4 and CHTOP onto mRNA. Also associates with pre-mRNA independent of ALYREF/THOC4. Involved in the nuclear export of intronless mRNA; the ATP-bound form is proposed to recruit export adapter ALYREF/THOC4 to intronless mRNA; its ATPase activity is cooperatively stimulated by RNA and ALYREF/THOC4 and ATP hydrolysis is thought to trigger the dissociation from RNA to allow the association of ALYREF/THOC4 and the NXF1-NXT1 heterodimer. Involved in transcription elongation and genome stability. Splice factor that is required for the first ATP-dependent step in spliceosome assembly and for the interaction of U2 snRNP with the branchpoint. Has both RNA-stimulated ATP binding/hydrolysis activity and ATP-dependent RNA unwinding activity. Even with the stimulation of RNA, the ATPase activity is weak. Can only hydrolyze ATP but not other NTPs. The RNA stimulation of ATPase activity does not have a strong preference for the sequence and length of the RNA. However, ssRNA stimulates the ATPase activity much more strongly than dsRNA. Can unwind 5' or 3' overhangs or blunt end RNA duplexes in vitro. The ATPase and helicase activities are not influenced by U2AF2; the effect of ALYREF/THOC4 is reported conflictingly. This chain is Spliceosome RNA helicase DDX39B (DDX39B), found in Canis lupus familiaris (Dog).